A 388-amino-acid chain; its full sequence is Probable E3 ubiquitin-protein ligase LOG2 (388 aa).

Residues 1-43 (MGNISSSGGEGRRRRRRNHTAAPPPPPPPPSSSLPPPPLPTEI) form a disordered region. Gly-2 carries the N-myristoyl glycine lipid modification. Residues 22 to 40 (APPPPPPPPSSSLPPPPLP) are compositionally biased toward pro residues. The segment at 159–281 (FTFDATVSGR…GEIKIRVVKQ (123 aa)) is DAR2 domain. Residues 319-358 (CVICLSEPRDTTVLPCRHMCMCSGCAKVLRFQTNRCPICR) form an RING-type; atypical zinc finger. The disordered stretch occupies residues 368–388 (KVHGNNGSGNNTGQGETVEQE).

The protein belongs to the RING-type zinc finger family. LOG2 subfamily. Interacts with GDU1. In terms of processing, myristoylated (in vitro). Expressed in the vascular tissues in both phloem and xylem parenchyma cells.

It is found in the cell membrane. The enzyme catalyses S-ubiquitinyl-[E2 ubiquitin-conjugating enzyme]-L-cysteine + [acceptor protein]-L-lysine = [E2 ubiquitin-conjugating enzyme]-L-cysteine + N(6)-ubiquitinyl-[acceptor protein]-L-lysine.. Its pathway is protein modification; protein ubiquitination. Acts as an E3 ubiquitin-protein ligase, or as part of E3 complex, which accepts ubiquitin from specific E2 ubiquitin-conjugating enzymes and then transfers it to substrates (in vitro). Required for GLUTAMINE DUMPER 1(GDU1)-induced amino acid secretion and for amino acid homeostasis. Ubiquitinates GDU1 (in vitro). In Arabidopsis thaliana (Mouse-ear cress), this protein is Probable E3 ubiquitin-protein ligase LOG2 (LOG2).